We begin with the raw amino-acid sequence, 162 residues long: Protein FAM162B (162 aa).

Residues 26-69 are disordered; that stretch reads EATRRPAPALPPRGLPCYSSGGAPSNSGPQGHGEIHRVPTQRRP. A helical transmembrane segment spans residues 107-127; that stretch reads VKACYIMIGLTIIACFAVIVS.

The protein belongs to the UPF0389 family.

The protein localises to the membrane. The polypeptide is Protein FAM162B (FAM162B) (Homo sapiens (Human)).